We begin with the raw amino-acid sequence, 925 residues long: Coronin-7 (925 aa).

4 WD repeats span residues 75-115 (CHSD…QALP), 124-163 (PEDL…PLTE), 166-205 (AHGD…QASQ), and 209-253 (AHEN…SALA). 2 disordered regions span residues 196–216 (DPRT…SRDS) and 399–465 (LVPP…SLQS). The segment covering 201 to 210 (PQASQSTQAH) has biased composition (polar residues). The span at 429–460 (SSPPSSLTSPSTPSSLGPTLSSTSGIGTGPSL) shows a compositional bias: low complexity. S462 and S465 each carry phosphoserine. A Glycyl lysine isopeptide (Lys-Gly) (interchain with G-Cter in ubiquitin) cross-link involves residue K472. WD repeat units follow at residues 542-582 (QNGA…LEEV), 592-632 (GHME…DRLK), and 635-674 (GHQD…EPLQ). A Glycyl lysine isopeptide (Lys-Gly) (interchain with G-Cter in ubiquitin) cross-link involves residue K680. Residues 728–768 (DVAPSTLVPSYEPRHWPGAPDWQGDARVFLYELLPESPFFM) form a WD 8 repeat. Residues 857 to 925 (LQPPDMSPVS…FEGVDEDEWD (69 aa)) form a disordered region. Residues 866–882 (SQAPREAPARRAPSSAQ) are compositionally biased toward low complexity. The segment covering 884-896 (LEEKSDQQKKEEL) has biased composition (basic and acidic residues). S915 bears the Phosphoserine mark.

This sequence belongs to the WD repeat coronin family. As to quaternary structure, interacts with clathrin adapter AP1 complex. This interaction takes place at Golgi membranes and not AP1-positive endosomal membranes. Interacts (when ubiquitinated at Lys-472) with EPS15. Post-translationally, the membrane-associated form is phosphorylated on tyrosine residues. In terms of processing, ubiquitinated via 'Lys-33'-linked ubiquitin chains by the BCR(KLHL20) E3 ubiquitin ligase complex: 'Lys-33'-linked ubiquitination promotes interaction with EPS15 and facilitates actin polymerization at the trans-Golgi network, thereby facilitating post-Golgi trafficking. Deubiquitinated by ZRANB1/TRABID.

The protein localises to the golgi apparatus membrane. Its subcellular location is the golgi apparatus. It is found in the trans-Golgi network. It localises to the cytoplasmic vesicle. The protein resides in the cytoplasm. The protein localises to the cytosol. In terms of biological role, F-actin regulator involved in anterograde Golgi to endosome transport: upon ubiquitination via 'Lys-33'-linked ubiquitin chains by the BCR(KLHL20) E3 ubiquitin ligase complex, interacts with EPS15 and localizes to the trans-Golgi network, where it promotes actin polymerization, thereby facilitating post-Golgi trafficking. May play a role in the maintenance of the Golgi apparatus morphology. The sequence is that of Coronin-7 (CORO7) from Pongo abelii (Sumatran orangutan).